The following is a 66-amino-acid chain: Small ribosomal subunit protein bS21B (66 aa).

The tract at residues 38–66 is disordered; sequence YVKPTQKRKIAKKAAISKAKKEARRSYSY.

This sequence belongs to the bacterial ribosomal protein bS21 family.

The sequence is that of Small ribosomal subunit protein bS21B from Francisella tularensis subsp. tularensis (strain SCHU S4 / Schu 4).